A 232-amino-acid polypeptide reads, in one-letter code: Large ribosomal subunit protein uL1 (232 aa).

The protein belongs to the universal ribosomal protein uL1 family. In terms of assembly, part of the 50S ribosomal subunit.

In terms of biological role, binds directly to 23S rRNA. The L1 stalk is quite mobile in the ribosome, and is involved in E site tRNA release. Its function is as follows. Protein L1 is also a translational repressor protein, it controls the translation of the L11 operon by binding to its mRNA. The protein is Large ribosomal subunit protein uL1 of Cereibacter sphaeroides (strain ATCC 17025 / ATH 2.4.3) (Rhodobacter sphaeroides).